A 115-amino-acid polypeptide reads, in one-letter code: Parathyroid hormone (115 aa).

An N-terminal signal peptide occupies residues 1-25 (MMSANTVAKVMIIMLAVCLLTQTDG). A propeptide spanning residues 26-31 (KPVRKR) is cleaved from the precursor. The segment at 51 to 69 (RMQWLRRKLQDMHNFVSLG) is important for receptor binding.

It belongs to the parathyroid hormone family. In terms of assembly, interacts with PTH1R (via N-terminal extracellular domain). As to expression, highly expressed in the parathyroid gland. Also expressed in the placenta, thymus and testis.

It is found in the secreted. Parathyroid hormone elevates calcium level by dissolving the salts in bone and preventing their renal excretion. Acts by binding to its receptor, PTH1R, activating G protein-coupled receptor signaling. Stimulates [1-14C]-2-deoxy-D-glucose (2DG) transport and glycogen synthesis in osteoblastic cells. This chain is Parathyroid hormone, found in Mus musculus (Mouse).